A 61-amino-acid polypeptide reads, in one-letter code: Small ribosomal subunit protein uS14 (61 aa).

Zn(2+) contacts are provided by C24, C27, C40, and C43.

Belongs to the universal ribosomal protein uS14 family. Zinc-binding uS14 subfamily. As to quaternary structure, part of the 30S ribosomal subunit. Contacts proteins S3 and S10. Requires Zn(2+) as cofactor.

Its function is as follows. Binds 16S rRNA, required for the assembly of 30S particles and may also be responsible for determining the conformation of the 16S rRNA at the A site. In Alkaliphilus metalliredigens (strain QYMF), this protein is Small ribosomal subunit protein uS14.